The primary structure comprises 2774 residues: Teneurin-2 (2774 aa).

A Teneurin N-terminal domain is found at Met1–Cys375. At Met1 to Ser379 the chain is on the cytoplasmic side. Residues Ser90 and Ser124 each carry the phosphoserine modification. The disordered stretch occupies residues Thr111 to Asn271. Positions Ser141–Thr155 are enriched in polar residues. At Thr155 the chain carries Phosphothreonine. Ser157 is subject to Phosphoserine. A compositionally biased stretch (basic and acidic residues) spans Asn159–Gly168. Low complexity predominate over residues Thr174–Ser188. Residues Asp202–Asp211 show a composition bias toward polar residues. Residues Ser229 to Pro240 show a composition bias toward low complexity. Residues Ala380–Leu400 traverse the membrane as a helical segment. The Extracellular segment spans residues Gly401–Arg2774. 2 N-linked (GlcNAc...) asparagine glycosylation sites follow: Asn443 and Asn482. EGF-like domains follow at residues Asp575–Ala603, Ala605–Asp634, Pro636–Glu668, Glu669–Leu701, Ala702–Ser735, Val738–Asp766, Val769–Thr797, and Asp808–Asn841. 22 disulfide bridges follow: Cys576-Cys586, Cys580-Cys591, Cys593-Cys602, Cys611-Cys622, Cys624-Cys633, Cys640-Cys651, Cys645-Cys656, Cys658-Cys667, Cys672-Cys683, Cys677-Cys688, Cys690-Cys699, Cys710-Cys723, Cys725-Cys734, Cys739-Cys749, Cys743-Cys754, Cys756-Cys765, Cys770-Cys780, Cys774-Cys785, Cys787-Cys796, Cys810-Cys820, Cys814-Cys829, and Cys831-Cys840. Residues Asn925, Asn948, and Asn1267 are each glycosylated (N-linked (GlcNAc...) asparagine). 5 NHL repeats span residues Leu1272 to Leu1316, Ala1342 to Ile1386, Leu1401 to Arg1452, Leu1474 to Leu1501, and Cys1530 to Asn1573. One copy of the YD 1 repeat lies at Tyr1583 to His1602. Asn1616 is a glycosylation site (N-linked (GlcNAc...) asparagine). 3 YD repeats span residues Tyr1619–Arg1639, Tyr1682–Phe1701, and Tyr1702–His1724. Asn1712, Asn1749, Asn1773, Asn1807, and Asn1892 each carry an N-linked (GlcNAc...) asparagine glycan. YD repeat units lie at residues Tyr1895–Asp1914, Tyr1936–Glu1954, Tyr1955–Ser1975, Tyr1982–Asp1999, Tyr2000–Lys2021, Tyr2022–Thr2039, Tyr2042–Thr2062, Tyr2065–Ile2085, Tyr2093–Pro2113, Tyr2119–Tyr2136, Tyr2137–Val2163, Tyr2165–Gln2178, Tyr2179–Thr2202, Tyr2205–Ser2225, Tyr2226–Leu2246, Tyr2248–Gly2268, Tyr2280–Tyr2300, and Tyr2302–Phe2322. A glycan (N-linked (GlcNAc...) asparagine) is linked at Asn1993. Asn2197 carries an N-linked (GlcNAc...) asparagine glycan. Asn2337 carries an N-linked (GlcNAc...) asparagine glycan. A YD 23 repeat occupies Tyr2348–Leu2389. N-linked (GlcNAc...) asparagine glycosylation is present at Asn2648.

This sequence belongs to the tenascin family. Teneurin subfamily. In terms of assembly, homodimer; disulfide-linked. Heterodimer with either TENM1 or TENM3. May also form heterodimer with TENM4. Interacts with ADGRL1 isoform 2. Post-translationally, derives from the membrane form by proteolytic processing. Derives from the plasma membrane form by proteolytic cleavage and translocates to the nucleus. Homophilic binding of the C-terminal extracellular domain stimulates its proteolytic cleavage and release in the cytoplasmic. Is subjected to rapid degradation by the proteasome pathway. Expressed in the brain (at protein level).

The protein localises to the cell membrane. The protein resides in the presynaptic cell membrane. It is found in the postsynaptic cell membrane. Its subcellular location is the endoplasmic reticulum. It localises to the golgi apparatus. The protein localises to the synapse. The protein resides in the cell projection. It is found in the dendritic spine. Its subcellular location is the filopodium. It localises to the growth cone. The protein localises to the nucleus. The protein resides in the PML body. Functionally, involved in neural development, regulating the establishment of proper connectivity within the nervous system. Acts as a ligand of the ADGRL1 and ADGRL3 receptors that are expressed at the surface of adjacent cells. Promotes the formation of filopodia and enlarged growth cone in neuronal cells. Mediates axon guidance and homophilic and heterophilic cell-cell adhesion. May function as a cellular signal transducer. In terms of biological role, induces gene transcription inhibition. The sequence is that of Teneurin-2 (Tenm2) from Rattus norvegicus (Rat).